The sequence spans 539 residues: Trigger factor (539 aa).

A PPIase FKBP-type domain is found at 163-252 (GDQLTVQIET…VLDVQERLLP (90 aa)). Low complexity-rich tracts occupy residues 434-447 (SFEQAASPEAASEP) and 475-484 (AASPEAASEP). The tract at residues 434–539 (SFEQAASPEA…DVATPEARTE (106 aa)) is disordered. Residues 509–528 (TETPIVSQEENGESVENQSV) show a composition bias toward polar residues.

The protein belongs to the FKBP-type PPIase family. Tig subfamily.

The protein resides in the cytoplasm. It carries out the reaction [protein]-peptidylproline (omega=180) = [protein]-peptidylproline (omega=0). In terms of biological role, involved in protein export. Acts as a chaperone by maintaining the newly synthesized protein in an open conformation. Functions as a peptidyl-prolyl cis-trans isomerase. In Roseiflexus sp. (strain RS-1), this protein is Trigger factor.